The following is a 479-amino-acid chain: Replication factor C large subunit (479 aa).

56–63 (GPPGVGKT) is a binding site for ATP. Over residues 435 to 461 (LGEKPLEPQEAKARRRGEKASRDEGRK) the composition is skewed to basic and acidic residues. The segment at 435 to 479 (LGEKPLEPQEAKARRRGEKASRDEGRKAGKRERKGVGLDFFLGEQ) is disordered.

This sequence belongs to the activator 1 small subunits family. RfcL subfamily. In terms of assembly, heteromultimer composed of small subunits (RfcS) and large subunits (RfcL).

Functionally, part of the RFC clamp loader complex which loads the PCNA sliding clamp onto DNA. The chain is Replication factor C large subunit from Aeropyrum pernix (strain ATCC 700893 / DSM 11879 / JCM 9820 / NBRC 100138 / K1).